The chain runs to 260 residues: Phosphatidate cytidylyltransferase (260 aa).

A run of 7 helical transmembrane segments spans residues I9 to F29, M46 to L66, A70 to L90, F102 to L122, L130 to F150, F172 to F192, and L196 to V216.

Belongs to the CDS family.

The protein localises to the cell membrane. It carries out the reaction a 1,2-diacyl-sn-glycero-3-phosphate + CTP + H(+) = a CDP-1,2-diacyl-sn-glycerol + diphosphate. It participates in phospholipid metabolism; CDP-diacylglycerol biosynthesis; CDP-diacylglycerol from sn-glycerol 3-phosphate: step 3/3. In Staphylococcus saprophyticus subsp. saprophyticus (strain ATCC 15305 / DSM 20229 / NCIMB 8711 / NCTC 7292 / S-41), this protein is Phosphatidate cytidylyltransferase (cdsA).